Here is a 135-residue protein sequence, read N- to C-terminus: uncharacterized protein (135 aa).

Residues 1-70 (MKPDWPRRGA…RWRPQGTGTG (70 aa)) form a disordered region.

This is an uncharacterized protein from Homo sapiens (Human).